The chain runs to 117 residues: Large ribosomal subunit protein bL17 (117 aa).

The protein belongs to the bacterial ribosomal protein bL17 family. Part of the 50S ribosomal subunit. Contacts protein L32.

In Neorickettsia sennetsu (strain ATCC VR-367 / Miyayama) (Ehrlichia sennetsu), this protein is Large ribosomal subunit protein bL17.